A 644-amino-acid chain; its full sequence is Protein ecdysoneless homolog (644 aa).

Disordered stretches follow at residues 430–449 (AVGK…QNYD), 496–537 (LGPR…SLKG), 567–589 (QVEP…TGES), and 623–644 (QSMG…PTKN). Residues 431 to 447 (VGKKESESVSKEEKEQN) show a composition bias toward basic and acidic residues. Residues 439–644 (VSKEEKEQNY…HRPTSKPTKN (206 aa)) form a transcription activation region. An involved in nuclear export region spans residues 481-497 (ITFDADSFLNYFDKILG). Residues 502 to 532 (ESDSDDLDDEDFECLDSDDDLDFETHEPGEE) form an acidic region required for transactivation activity region. Phosphoserine is present on residues Ser-503, Ser-505, and Ser-518. Residues 503-523 (SDSDDLDDEDFECLDSDDDLD) show a composition bias toward acidic residues. Residues 524 to 534 (FETHEPGEEAS) are compositionally biased toward basic and acidic residues. Residues 567-577 (QVEPVSQTTDN) show a composition bias toward polar residues.

Belongs to the ECD family. As to quaternary structure, interacts with TP53, MDM2, TXNIP. Interacts (phosphorylated) with PIH1D1. Interacts with RUVBL1 mediating the PIH1D1-independent association with the R2TP complex. Interacts with RB1, RBL1 and RBL2; ECD competes with E2F1 for binding to hypophospshorylated RB1. Interacts with EP300. Interacts with DDX39A. In terms of processing, phosphorylated predominantly by CK2 on two serine-containing clusters; involved in cell cycle regulation activity. In terms of tissue distribution, highly expressed in muscle and heart. Over-expressed in pancreatic and breast cancers.

It localises to the cytoplasm. The protein resides in the nucleus. Functionally, regulator of p53/TP53 stability and function. Inhibits MDM2-mediated degradation of p53/TP53 possibly by cooperating in part with TXNIP. May be involved transcriptional regulation. In vitro has intrinsic transactivation activity enhanced by EP300. May be a transcriptional activator required for the expression of glycolytic genes. Involved in regulation of cell cycle progression. Proposed to disrupt Rb-E2F binding leading to transcriptional activation of E2F proteins. The cell cycle -regulating function may depend on its RUVBL1-mediated association with the R2TP complex. May play a role in regulation of pre-mRNA splicing. Participates together with DDX39A in mRNA nuclear export. The polypeptide is Protein ecdysoneless homolog (ECD) (Homo sapiens (Human)).